Reading from the N-terminus, the 325-residue chain is uncharacterized protein (325 aa).

Residues 10–30 (IVFVSLAALVLLVSVSVFIYH) form a helical membrane-spanning segment. The region spanning 94 to 166 (KIAVVDRAGY…EIKAIIAMDI (73 aa)) is the AB hydrolase-1 domain.

The protein resides in the cell membrane. This is an uncharacterized protein from Bacillus subtilis (strain 168).